A 529-amino-acid polypeptide reads, in one-letter code: MGAFTFKHSFFGSFVECSGVLQTVFIFLLIPCCLADKRAPPLIPNVPLLWVWNAPTEFCIGGTNQPLDMSFFSIVGTPRKNITGQSITLYYVDRLGYYPYIDPHTGAIVHGGLPQLMNLQQHLRKSRQDILFYMPTDSVGLAVIDWEEWRPTWTRNWRPKDIYRNKSIELVKSQHPQYNHSYAVAVAKRDFERTGKAFMLETLKLGKSLRPSSLWGYYLFPDCYNTHFTKPNYDGHCPPIELQRNNDLQWLWNDSTALYPSVYLTSRVRSSQNGALYVRNRVHESIRVSKLMDDKNPLPIYVYIRLVFTDQTTTFLELDDLVHSVGEIVPLGVSGIIIWGSLSLTRSLVSCIGLENYMKGTLLPYLINVTLAAKMCGQVLCKNQGICTRKDWNTNTYLHLNATNFDIELQQNGKFVVHGKPSLEDLQEFSKNFHCSCYTNVACKDRLDVHNVRSVNVCTANNICIDAVLNFPSLDDDDEPPITDDTSQNQDSISDITSSAPPSSHILPKDLSWCLFLLSIFSQHWKYLL.

A signal peptide spans 1 to 35; the sequence is MGAFTFKHSFFGSFVECSGVLQTVFIFLLIPCCLA. Cystine bridges form between Cys59-Cys351 and Cys223-Cys237. An N-linked (GlcNAc...) asparagine glycan is attached at Asn81. Glu147 serves as the catalytic Proton donor. Asn165 and Asn179 each carry an N-linked (GlcNAc...) asparagine glycan. Residues Asn253 and Asn368 are each glycosylated (N-linked (GlcNAc...) asparagine). Intrachain disulfides connect Cys376–Cys387, Cys381–Cys435, and Cys437–Cys464. Asn401 carries N-linked (GlcNAc...) asparagine glycosylation. Positions 478-502 are disordered; that stretch reads DEPPITDDTSQNQDSISDITSSAPP. Over residues 487–502 the composition is skewed to polar residues; it reads SQNQDSISDITSSAPP. Ser492 carries GPI-anchor amidated serine lipidation. A propeptide spans 493-529 (removed in mature form); the sequence is ISDITSSAPPSSHILPKDLSWCLFLLSIFSQHWKYLL.

It belongs to the glycosyl hydrolase 56 family. Post-translationally, endoproteolysis (toward the C-terminus producing two disulfide-linked fragments) could activate PH-20. Testis.

The protein localises to the cell membrane. The catalysed reaction is Random hydrolysis of (1-&gt;4)-linkages between N-acetyl-beta-D-glucosamine and D-glucuronate residues in hyaluronate.. In terms of biological role, involved in sperm-egg adhesion. Upon fertilization sperm must first penetrate a layer of cumulus cells that surrounds the egg before reaching the zona pellucida. The cumulus cells are embedded in a matrix containing hyaluronic acid which is formed prior to ovulation. This protein aids in penetrating the layer of cumulus cells by digesting hyaluronic acid. This is Hyaluronidase PH-20 (SPAM1) from Cavia porcellus (Guinea pig).